The chain runs to 580 residues: Cis-3-hydroxy-L-proline dehydratase (580 aa).

The active-site Proton acceptor is the serine 66.

It belongs to the AcnX family. As to quaternary structure, monomer. The cofactor is Fe(3+).

The enzyme catalyses cis-3-hydroxy-L-proline = 1-pyrroline-2-carboxylate + H2O. Inhibited by Zn(2+), Cd(2+) and Hg(2+), but not by Co(2+), Ni(2+), Mn(2+), Sr(2+), Mg(2+), or Fe(3+). Inhibited by pyrrole-2-carboxylate and its derivative 2-thiophenecarboxylate, but not by trans-aconitate, fluorocitrate and oxalomalate, which are typical inhibitors of the aconitase enzymes. Functionally, catalyzes the dehydration of cis-3-hydroxy-L-proline (c3LHyp) to Delta(1)-pyrroline-2-carboxylate (Pyr2C). Also has activity with (2S,3S,4R)-3,4-dihydroxyproline as substrate, albeit at about 300-fold lower rate. No activity with L-proline, trans-4-hydroxy-L-proline (t4LHyp), cis-4-hydroxy-L-proline (c4LHyp), trans-3-hydroxy-L-proline (t3LHyp), D-proline, cis-4-hydroxy-D-proline (c4DHyp), trans-4-hydroxy-D-proline (t4DHyp) or L-serine as substrates. No hydro-lyase activity with citrate or cis-acotinate. Does not catalyze 2-epimerization of c3LHyp to trans-3-hydroxy-D-proline (t3DHyp). Involved in a degradation pathway that converts c3LHyp to L-proline, which would allow P.aeruginosa to grow on c3LHyp as a sole carbon source. This is Cis-3-hydroxy-L-proline dehydratase from Pseudomonas aeruginosa (strain ATCC 15692 / DSM 22644 / CIP 104116 / JCM 14847 / LMG 12228 / 1C / PRS 101 / PAO1).